Reading from the N-terminus, the 502-residue chain is RNA polymerase sigma factor sigA (502 aa).

The transit peptide at 1-23 (MATAAVIGLNTGKRLLSSSFYHS) directs the protein to the chloroplast. The segment covering 57 to 71 (YSPSFPSSNRHTQSA) has biased composition (polar residues). A disordered region spans residues 57-92 (YSPSFPSSNRHTQSAKALKESVDVASTEKPWLPNGT). Thr-170 bears the Phosphothreonine mark. The Polymerase core binding signature appears at 287 to 300 (DLVQGGLIGLLRGI). The H-T-H motif DNA-binding region spans 461-480 (WEDISKRIGLSRERVRQVGL).

The protein belongs to the sigma-70 factor family. In terms of assembly, interacts with SIB1 in chloroplast. Binds to CSK. The phosphorylation of Thr-170 mediated by oxidative conditions of plastoquinone (PQ) changes the promoter specificity, selectively inhibiting the transcription of the psaA gene, which encodes a PS-I protein. Phosphorylation of the holoenzyme occurs in the dark. This phosphorylation in response to plastoquinone redox state modification is mediated by CSK. Highly expressed in leaves, and to a lesser extent in roots. Expressed in old seedlings (8 days), cotyledons, hypocotyls, leaves, sepals and siliques.

It localises to the plastid. Its subcellular location is the chloroplast. Its function is as follows. Essential protein. Sigma factors are initiation factors that promote the attachment of plastid-encoded RNA polymerase (PEP) to specific initiation sites and are then released. Controls the transcription of the psaA gene and thus modulates photosystem stoichiometry. Thereby maintains a harmonious electron flow and photosynthetic efficiency. The sequence is that of RNA polymerase sigma factor sigA (SIGA) from Arabidopsis thaliana (Mouse-ear cress).